The chain runs to 537 residues: Chaperonin GroEL 2 (537 aa).

Residues 29-32 (TLGP), 86-90 (DGTTT), glycine 413, 477-479 (NAA), and aspartate 493 contribute to the ATP site.

It belongs to the chaperonin (HSP60) family. In terms of assembly, forms a cylinder of 14 subunits composed of two heptameric rings stacked back-to-back. Interacts with the co-chaperonin GroES.

The protein localises to the cytoplasm. The catalysed reaction is ATP + H2O + a folded polypeptide = ADP + phosphate + an unfolded polypeptide.. In terms of biological role, together with its co-chaperonin GroES, plays an essential role in assisting protein folding. The GroEL-GroES system forms a nano-cage that allows encapsulation of the non-native substrate proteins and provides a physical environment optimized to promote and accelerate protein folding. The chain is Chaperonin GroEL 2 from Thermobifida fusca (strain YX).